A 318-amino-acid chain; its full sequence is Protein FAM228A (318 aa).

Positions 259-297 (SQESKRHEKKGLALGTGQHRPRSWAAGEGQQRRRSQPVD) are disordered.

The protein belongs to the FAM228 family.

The protein is Protein FAM228A (FAM228A) of Bos taurus (Bovine).